Reading from the N-terminus, the 217-residue chain is Imidazole glycerol phosphate synthase subunit HisH (217 aa).

In terms of domain architecture, Glutamine amidotransferase type-1 spans 3-217; sequence SVAVIDYGMG…FLRWEPWSSR (215 aa). Residue Cys-82 is the Nucleophile of the active site. Residues His-193 and Glu-195 contribute to the active site.

As to quaternary structure, heterodimer of HisH and HisF.

The protein resides in the cytoplasm. The catalysed reaction is 5-[(5-phospho-1-deoxy-D-ribulos-1-ylimino)methylamino]-1-(5-phospho-beta-D-ribosyl)imidazole-4-carboxamide + L-glutamine = D-erythro-1-(imidazol-4-yl)glycerol 3-phosphate + 5-amino-1-(5-phospho-beta-D-ribosyl)imidazole-4-carboxamide + L-glutamate + H(+). The enzyme catalyses L-glutamine + H2O = L-glutamate + NH4(+). Its pathway is amino-acid biosynthesis; L-histidine biosynthesis; L-histidine from 5-phospho-alpha-D-ribose 1-diphosphate: step 5/9. IGPS catalyzes the conversion of PRFAR and glutamine to IGP, AICAR and glutamate. The HisH subunit catalyzes the hydrolysis of glutamine to glutamate and ammonia as part of the synthesis of IGP and AICAR. The resulting ammonia molecule is channeled to the active site of HisF. This chain is Imidazole glycerol phosphate synthase subunit HisH, found in Methylococcus capsulatus (strain ATCC 33009 / NCIMB 11132 / Bath).